Reading from the N-terminus, the 325-residue chain is Protease HtpX homolog (325 aa).

The helical transmembrane segment at 20–40 (IGYLLGGGGGMMIALVIAVAM) threads the bilayer. His-130 provides a ligand contact to Zn(2+). Glu-131 is an active-site residue. Zn(2+) is bound at residue His-134. Helical transmembrane passes span 145-165 (IVAT…FLGG) and 173-193 (VMGV…AMIV). Residue Glu-202 participates in Zn(2+) binding. Positions 288-325 (AMTARAAAPSQNSGPWGQRSDNAGGNSNGGSRYRGPWS) are disordered. A compositionally biased stretch (low complexity) spans 306 to 325 (RSDNAGGNSNGGSRYRGPWS).

It belongs to the peptidase M48B family. Zn(2+) is required as a cofactor.

It localises to the cell inner membrane. This chain is Protease HtpX homolog, found in Brucella abortus (strain S19).